Reading from the N-terminus, the 378-residue chain is tRNA N(3)-cytidine methyltransferase METTL2 (378 aa).

The S-adenosyl-L-methionine site is built by Trp-78, Tyr-82, Gly-188, Asp-213, Asp-239, Leu-240, and Ile-260.

This sequence belongs to the methyltransferase superfamily. METL family. As to quaternary structure, monomer. Interacts with DALRD3.

The protein localises to the cytoplasm. The enzyme catalyses cytidine(32) in tRNA(Thr) + S-adenosyl-L-methionine = N(3)-methylcytidine(32) in tRNA(Thr) + S-adenosyl-L-homocysteine + H(+). It carries out the reaction cytidine(32) in tRNA(Arg)(CCU) + S-adenosyl-L-methionine = N(3)-methylcytidine(32) in tRNA(Arg)(CCU) + S-adenosyl-L-homocysteine + H(+). Functionally, S-adenosyl-L-methionine-dependent methyltransferase that mediates N(3)-methylcytidine modification of residue 32 of the tRNA anticodon loop of tRNA(Thr)(UGU) and tRNA(Arg)(CCU). N(3)-methylcytidine methylation by METTL2 requires the N6-threonylcarbamoylation of tRNA (t6A37) by the EKC/KEOPS complex as prerequisite. The chain is tRNA N(3)-cytidine methyltransferase METTL2 (METTL2) from Bos taurus (Bovine).